The sequence spans 497 residues: D-gluconate dehydratase (497 aa).

Position 303 (Glu303) interacts with Mg(2+). His305 acts as the Proton donor in catalysis. Residues Glu329 and Glu355 each coordinate Mg(2+). The active-site Proton acceptor is His405.

It belongs to the mandelate racemase/muconate lactonizing enzyme family. GaD subfamily. Mg(2+) serves as cofactor.

The catalysed reaction is D-gluconate = 2-dehydro-3-deoxy-D-gluconate + H2O. It functions in the pathway carbohydrate acid metabolism; D-gluconate degradation. Functionally, involved in the degradation of glucose via the Entner-Doudoroff pathway. Catalyzes the dehydration of gluconate to produce 2-keto-3-deoxygluconate (KDG). It is not able to use D-galactonate as substrate. In Thermoproteus tenax, this protein is D-gluconate dehydratase (gad).